The following is a 279-amino-acid chain: Dermonecrotic toxin LspiSicTox-betaIE3ii (279 aa).

H5 is a catalytic residue. The Mg(2+) site is built by E25 and D27. The active-site Nucleophile is the H41. 2 disulfide bridges follow: C45/C51 and C47/C190. D85 lines the Mg(2+) pocket.

It belongs to the arthropod phospholipase D family. Class II subfamily. Requires Mg(2+) as cofactor. In terms of tissue distribution, expressed by the venom gland.

The protein localises to the secreted. The catalysed reaction is an N-(acyl)-sphingosylphosphocholine = an N-(acyl)-sphingosyl-1,3-cyclic phosphate + choline. It carries out the reaction an N-(acyl)-sphingosylphosphoethanolamine = an N-(acyl)-sphingosyl-1,3-cyclic phosphate + ethanolamine. The enzyme catalyses a 1-acyl-sn-glycero-3-phosphocholine = a 1-acyl-sn-glycero-2,3-cyclic phosphate + choline. It catalyses the reaction a 1-acyl-sn-glycero-3-phosphoethanolamine = a 1-acyl-sn-glycero-2,3-cyclic phosphate + ethanolamine. Functionally, dermonecrotic toxins cleave the phosphodiester linkage between the phosphate and headgroup of certain phospholipids (sphingolipid and lysolipid substrates), forming an alcohol (often choline) and a cyclic phosphate. This toxin acts on sphingomyelin (SM). It may also act on ceramide phosphoethanolamine (CPE), lysophosphatidylcholine (LPC) and lysophosphatidylethanolamine (LPE), but not on lysophosphatidylserine (LPS), and lysophosphatidylglycerol (LPG). It acts by transphosphatidylation, releasing exclusively cyclic phosphate products as second products. Induces dermonecrosis, hemolysis, increased vascular permeability, edema, inflammatory response, and platelet aggregation. This chain is Dermonecrotic toxin LspiSicTox-betaIE3ii, found in Loxosceles spinulosa (Recluse spider).